Here is a 65-residue protein sequence, read N- to C-terminus: Large ribosomal subunit protein bL35 (65 aa).

This sequence belongs to the bacterial ribosomal protein bL35 family.

The chain is Large ribosomal subunit protein bL35 from Burkholderia ambifaria (strain MC40-6).